Here is a 337-residue protein sequence, read N- to C-terminus: Phytanoyl-CoA dioxygenase, peroxisomal (337 aa).

The N-terminal 30 residues, 1–30 (MDRNRASARLTVLLRHLGCRSAGTIIAHHT), are a transit peptide targeting the peroxisome. N6-succinyllysine is present on residues lysine 59 and lysine 108. Residues lysine 120, methionine 157, 175–177 (HQD), and tryptophan 193 contribute to the 2-oxoglutarate site. Positions 175 and 177 each coordinate Fe cation. An N6-succinyllysine modification is found at lysine 252. Position 264 (histidine 264) interacts with Fe cation. Positions 266 and 275 each coordinate 2-oxoglutarate.

It belongs to the PhyH family. As to quaternary structure, interacts with FKBP52 and PHYHIP. The cofactor is Fe cation. Requires L-ascorbate as cofactor. ATP is required as a cofactor. It depends on Mg(2+) as a cofactor.

The protein localises to the peroxisome. It carries out the reaction phytanoyl-CoA + 2-oxoglutarate + O2 = 2-hydroxyphytanoyl-CoA + succinate + CO2. The enzyme catalyses 3-methylhexadecanoyl-CoA + 2-oxoglutarate + O2 = 2-hydroxy-3-methylhexadecanoyl-CoA + succinate + CO2. It catalyses the reaction hexadecanoyl-CoA + 2-oxoglutarate + O2 = 2-hydroxyhexadecanoyl-CoA + succinate + CO2. The catalysed reaction is octanoyl-CoA + 2-oxoglutarate + O2 = 2-hydroxyoctanoyl-CoA + succinate + CO2. It carries out the reaction decanoyl-CoA + 2-oxoglutarate + O2 = 2-hydroxydecanoyl-CoA + succinate + CO2. The enzyme catalyses 3-methylbutanoyl-CoA + 2-oxoglutarate + O2 = 2-hydroxy-3-methylbutanoyl-CoA + succinate + CO2. It catalyses the reaction heptadecanoyl-CoA + 2-oxoglutarate + O2 = 2-hydroxyheptadecanoyl-CoA + succinate + CO2. The catalysed reaction is eicosanoyl-CoA + 2-oxoglutarate + O2 = 2-hydroxyeicosanoyl-CoA + succinate + CO2. It carries out the reaction octadecanoyl-CoA + 2-oxoglutarate + O2 = 2-hydroxyoctadecanoyl-CoA + succinate + CO2. The enzyme catalyses dodecanoyl-CoA + 2-oxoglutarate + O2 = 2-hydroxydodecanoyl-CoA + succinate + CO2. It catalyses the reaction tetradecanoyl-CoA + 2-oxoglutarate + O2 = 2-hydroxytetradecanoyl-CoA + succinate + CO2. The catalysed reaction is hexanoyl-CoA + 2-oxoglutarate + O2 = 2-hydroxyhexanoyl-CoA + succinate + CO2. It carries out the reaction butanoyl-CoA + 2-oxoglutarate + O2 = 2-hydroxybutanoyl-CoA + succinate + CO2. The enzyme catalyses 3-methylnonanoyl-CoA + 2-oxoglutarate + O2 = 2-hydroxy-3-methylnonanoyl-CoA + succinate + CO2. It catalyses the reaction 3-methylundecanoyl-CoA + 2-oxoglutarate + O2 = 2-hydroxy-3-methylundecanoyl-CoA + succinate + CO2. The catalysed reaction is 3-methyldodecanoyl-CoA + 2-oxoglutarate + O2 = 2-hydroxy-3-methyldodecanoyl-CoA + succinate + CO2. It participates in lipid metabolism; fatty acid metabolism. Its function is as follows. Catalyzes the 2-hydroxylation of not only racemic phytanoyl-CoA and the isomers of 3-methylhexadecanoyl-CoA, but also a variety of other mono- branched 3-methylacyl-CoA esters (with a chain length of at least seven carbon atoms) and straight-chain acyl-CoA esters (with a chain length longer than four carbon atoms). Does not hydroxylate long and very long straight chain acyl-CoAs or 2-methyl-and 4-methyl-branched acyl-CoAs. This chain is Phytanoyl-CoA dioxygenase, peroxisomal (PHYH), found in Bos taurus (Bovine).